A 280-amino-acid chain; its full sequence is Dermonecrotic toxin LgSicTox-alphaIA1 (280 aa).

His-12 is an active-site residue. 2 residues coordinate Mg(2+): Glu-32 and Asp-34. The active-site Nucleophile is His-48. A disulfide bridge links Cys-52 with Cys-58. Asp-92 contributes to the Mg(2+) binding site.

Belongs to the arthropod phospholipase D family. Class I subfamily. It depends on Mg(2+) as a cofactor. Expressed by the venom gland.

The protein localises to the secreted. The enzyme catalyses an N-(acyl)-sphingosylphosphocholine = an N-(acyl)-sphingosyl-1,3-cyclic phosphate + choline. It catalyses the reaction an N-(acyl)-sphingosylphosphoethanolamine = an N-(acyl)-sphingosyl-1,3-cyclic phosphate + ethanolamine. It carries out the reaction a 1-acyl-sn-glycero-3-phosphocholine = a 1-acyl-sn-glycero-2,3-cyclic phosphate + choline. The catalysed reaction is a 1-acyl-sn-glycero-3-phosphoethanolamine = a 1-acyl-sn-glycero-2,3-cyclic phosphate + ethanolamine. Dermonecrotic toxins cleave the phosphodiester linkage between the phosphate and headgroup of certain phospholipids (sphingolipid and lysolipid substrates), forming an alcohol (often choline) and a cyclic phosphate. This toxin acts on sphingomyelin (SM). It may also act on ceramide phosphoethanolamine (CPE), lysophosphatidylcholine (LPC) and lysophosphatidylethanolamine (LPE), but not on lysophosphatidylserine (LPS), and lysophosphatidylglycerol (LPG). It acts by transphosphatidylation, releasing exclusively cyclic phosphate products as second products. Induces dermonecrosis, hemolysis, increased vascular permeability, edema, inflammatory response, and platelet aggregation. This is Dermonecrotic toxin LgSicTox-alphaIA1 from Loxosceles gaucho (Spider).